A 1310-amino-acid polypeptide reads, in one-letter code: Cadherin-related family member 2 (1310 aa).

The first 20 residues, 1-20 (MAQLWLSCFLLPALVVSVAA), serve as a signal peptide directing secretion. The Extracellular portion of the chain corresponds to 21-1154 (NVAPKFLANM…ESDLSKQLIS (1134 aa)). Cadherin domains are found at residues 27-124 (LANM…APVF), 125-241 (QNTA…DPQF), and 242-353 (VREF…KPEF). 24 N-linked (GlcNAc...) asparagine glycosylation sites follow: Asn29, Asn134, Asn182, Asn188, Asn195, Asn300, Asn355, Asn371, Asn401, Asn460, Asn565, Asn600, Asn616, Asn632, Asn680, Asn696, Asn701, Asn775, Asn821, Asn871, Asn877, Asn911, Asn932, and Asn1107. 6 consecutive Cadherin domains span residues 368–480 (AQVN…RPTF), 481–586 (PQSL…APVV), 586–695 (VSGS…LPIF), 696–808 (NQSS…PPTL), 810–928 (VASL…APYF), and 930–1058 (PENK…TPKE). A helical membrane pass occupies residues 1155–1175 (VIIGLGVALLLVLVIMTMAFV). Over 1176–1310 (CVRKSYNRKL…TNAGLDTTDL (135 aa)) the chain is Cytoplasmic. The tract at residues 1180 to 1310 (SYNRKLQAMK…TNAGLDTTDL (131 aa)) is mediates interaction with USH1C and MYO7B and is required for proper localization to microvilli tips and function in microvilli organization. Ser1248 bears the Phosphoserine mark. The segment covering 1259 to 1268 (NSQEIKEHRP) has biased composition (basic and acidic residues). The segment at 1259–1310 (NSQEIKEHRPPHTPPEPDPEPLSVVLLGRQAGASGQLEGPSYTNAGLDTTDL) is disordered. Ser1299 carries the post-translational modification Phosphoserine. The span at 1299-1310 (SYTNAGLDTTDL) shows a compositional bias: polar residues.

Part of the IMAC/intermicrovillar adhesion complex/intermicrovillar tip-link complex composed of ANKS4B, MYO7B, USH1C, CDHR2 and CDHR5. Interacts with MAST2. Interacts (via cytoplasmic domain) with USH1C and MYO7B; required for proper localization of CDHR2 to microvilli tips and its function in brush border differentiation. In terms of tissue distribution, highly expressed in liver, kidney and colon. Moderately expressed in small intestine. Down-regulated in a number of liver and colon cancers. Expressed in duodenum with higher expression in enterocytes along the villus axis and lower expression in crypts (at protein level).

Its subcellular location is the apical cell membrane. The protein localises to the cell projection. The protein resides in the microvillus membrane. It is found in the cell junction. Functionally, intermicrovillar adhesion molecule that forms, via its extracellular domain, calcium-dependent heterophilic complexes with CDHR5 on adjacent microvilli. Thereby, controls the packing of microvilli at the apical membrane of epithelial cells. Through its cytoplasmic domain, interacts with microvillus cytoplasmic proteins to form the intermicrovillar adhesion complex/IMAC. This complex plays a central role in microvilli and epithelial brush border differentiation. May also play a role in cell-cell adhesion and contact inhibition in epithelial cells. This is Cadherin-related family member 2 from Homo sapiens (Human).